The primary structure comprises 184 residues: MTRYSVQSVDPTKTASARGAYLRTSFKNTYEVAGAIRGWNLQKALAYLDQVTDHKRAIPFRKHAGSIGRTGQGKEFGVTKARWPVKSIKFVQDLLQNAQANAETKGLDKETLVISHIQVNQAPKQRRRTYRAHGRINAYQSSPSHIELILSEPAEEIAKAKETSLAHISSRQRGRIAAQKRISA.

The protein belongs to the universal ribosomal protein uL22 family.

The chain is Large ribosomal subunit protein uL22 (RPL17) from Yarrowia lipolytica (strain CLIB 122 / E 150) (Yeast).